Consider the following 527-residue polypeptide: ATP synthase subunit alpha (527 aa).

172–179 contacts ATP; it reads GDRQTGKT.

It belongs to the ATPase alpha/beta chains family. F-type ATPases have 2 components, CF(1) - the catalytic core - and CF(0) - the membrane proton channel. CF(1) has five subunits: alpha(3), beta(3), gamma(1), delta(1), epsilon(1). CF(0) has three main subunits: a(1), b(2) and c(9-12). The alpha and beta chains form an alternating ring which encloses part of the gamma chain. CF(1) is attached to CF(0) by a central stalk formed by the gamma and epsilon chains, while a peripheral stalk is formed by the delta and b chains.

Its subcellular location is the cell inner membrane. It carries out the reaction ATP + H2O + 4 H(+)(in) = ADP + phosphate + 5 H(+)(out). Produces ATP from ADP in the presence of a proton gradient across the membrane. The alpha chain is a regulatory subunit. This is ATP synthase subunit alpha from Bacteroides fragilis (strain ATCC 25285 / DSM 2151 / CCUG 4856 / JCM 11019 / LMG 10263 / NCTC 9343 / Onslow / VPI 2553 / EN-2).